The following is a 393-amino-acid chain: ATP phosphoribosyltransferase regulatory subunit (393 aa).

The protein belongs to the class-II aminoacyl-tRNA synthetase family. HisZ subfamily. In terms of assembly, heteromultimer composed of HisG and HisZ subunits.

It localises to the cytoplasm. It participates in amino-acid biosynthesis; L-histidine biosynthesis; L-histidine from 5-phospho-alpha-D-ribose 1-diphosphate: step 1/9. Required for the first step of histidine biosynthesis. May allow the feedback regulation of ATP phosphoribosyltransferase activity by histidine. The protein is ATP phosphoribosyltransferase regulatory subunit of Shouchella clausii (strain KSM-K16) (Alkalihalobacillus clausii).